The primary structure comprises 297 residues: D-alanine--D-alanine ligase (297 aa).

Residues 95 to 294 (KMLWKAFGLP…FEQLVVKILE (200 aa)) enclose the ATP-grasp domain. 125–180 (VAKLGLPLMVKPSLEGSSVGLTKVKAVEELKSAVEYALKFDNTILIEEWLAGDELT) provides a ligand contact to ATP. Mg(2+) is bound by residues Asp-248, Glu-261, and Asn-263.

This sequence belongs to the D-alanine--D-alanine ligase family. Mg(2+) serves as cofactor. The cofactor is Mn(2+).

The protein resides in the cytoplasm. It catalyses the reaction 2 D-alanine + ATP = D-alanyl-D-alanine + ADP + phosphate + H(+). Its pathway is cell wall biogenesis; peptidoglycan biosynthesis. Functionally, cell wall formation. The protein is D-alanine--D-alanine ligase of Haemophilus influenzae (strain PittEE).